The following is a 430-amino-acid chain: Tyrosine--tRNA ligase (430 aa).

Tyrosine 32 provides a ligand contact to L-tyrosine. Residues 37–46 carry the 'HIGH' region motif; that stretch reads PTADSLHIGH. L-tyrosine is bound by residues tyrosine 172 and glutamine 176. Residues 232-236 carry the 'KMSKS' region motif; that stretch reads KFGKT. Lysine 235 provides a ligand contact to ATP. Positions 362-430 constitute an S4 RNA-binding domain; sequence ISLVDLLADA…KKSYYLIIVE (69 aa).

This sequence belongs to the class-I aminoacyl-tRNA synthetase family. TyrS type 1 subfamily. In terms of assembly, homodimer.

The protein resides in the cytoplasm. The enzyme catalyses tRNA(Tyr) + L-tyrosine + ATP = L-tyrosyl-tRNA(Tyr) + AMP + diphosphate + H(+). Catalyzes the attachment of tyrosine to tRNA(Tyr) in a two-step reaction: tyrosine is first activated by ATP to form Tyr-AMP and then transferred to the acceptor end of tRNA(Tyr). This Porphyromonas gingivalis (strain ATCC 33277 / DSM 20709 / CIP 103683 / JCM 12257 / NCTC 11834 / 2561) protein is Tyrosine--tRNA ligase.